Consider the following 293-residue polypeptide: LysM and putative peptidoglycan-binding domain-containing protein 4 (293 aa).

Residues 1–214 (MRQKEVLAKS…VADGADCGIQ (214 aa)) are Extracellular-facing. Residues 28-65 (FNNGSGDSGDSSEEESHQVVLRPRGKEHQKNSSQRPGA) form a disordered region. The N-linked (GlcNAc...) asparagine glycan is linked to N30. Residues 71–115 (LQRELAQEDSLNKLALQYGCKVADIKKANNFIREQDLYALKSIKI) form the LysM domain. A helical transmembrane segment spans residues 215–235 (WWNAVFLMLLIGIVLPVFYLV). At 236 to 293 (YFKIQATGEPSNGLNATVVPNGSMTLSPVPGQAPRLAIPVPTLPASDSQVSPTTQAGA) the chain is on the cytoplasmic side.

Its subcellular location is the membrane. The sequence is that of LysM and putative peptidoglycan-binding domain-containing protein 4 (Lysmd4) from Mus musculus (Mouse).